The sequence spans 581 residues: Arginine--tRNA ligase (581 aa).

The 'HIGH' region motif lies at 126–136; it reads PNLAKEMHVGH.

The protein belongs to the class-I aminoacyl-tRNA synthetase family. Monomer.

It localises to the cytoplasm. The catalysed reaction is tRNA(Arg) + L-arginine + ATP = L-arginyl-tRNA(Arg) + AMP + diphosphate. This chain is Arginine--tRNA ligase, found in Shewanella piezotolerans (strain WP3 / JCM 13877).